The sequence spans 225 residues: UPF0758 protein Bpet3149 (225 aa).

Residues 103–225 enclose the MPN domain; sequence AMSEPGSVKR…VVSMAELGLL (123 aa). Positions 174, 176, and 187 each coordinate Zn(2+). The JAMM motif signature appears at 174–187; sequence HNHPSGSAQPSQAD.

The protein belongs to the UPF0758 family.

The polypeptide is UPF0758 protein Bpet3149 (Bordetella petrii (strain ATCC BAA-461 / DSM 12804 / CCUG 43448)).